The primary structure comprises 202 residues: Outer-membrane lipoprotein carrier protein (202 aa).

Residues 1 to 18 form the signal peptide; that stretch reads MNKLFLILLLIFSHEVFS.

Belongs to the LolA family. As to quaternary structure, monomer.

The protein localises to the periplasm. In terms of biological role, participates in the translocation of lipoproteins from the inner membrane to the outer membrane. Only forms a complex with a lipoprotein if the residue after the N-terminal Cys is not an aspartate (The Asp acts as a targeting signal to indicate that the lipoprotein should stay in the inner membrane). The sequence is that of Outer-membrane lipoprotein carrier protein from Legionella pneumophila (strain Paris).